Reading from the N-terminus, the 842-residue chain is MTQVTVKELAQEVEAPVERLLQQMREAGLPHTDAGQVVTDNEKQTLLTHLKSSHKSKAEEPRKITLQRKTTSTLRVAGSKSISVEVRKKKVFVQRSPEEIQAEQKRELDERRAAENAARDKVEAEVRQRNEEQARRQAADSAVAAPAPAAKPEPAPAAAPAPVVADAPASEDAAARAAERKKDETRRNESRTRDDDRRRGEAPRVSIKVKVKEKEKAPTPRAAPRTTDEESDGARRGRGGKGKLKKRNQHGFQNPTGPVIRDVTIGETITVSELANQMSVKGAEVVKFMFKMGTPVTINQVLDQETAQLIAEELGHKVTLVSDTALEDSLAESLKFEGQTESRAPVVTVMGHVDHGKTSLLDYIRRAKVAAGEAGGITQHIGAYHVETDRGMVTFLDTPGHAAFTQMRARGAKATDIVILVVAADDGVMPQTREAVQHAKAAGVPLVVAVNKIDKPGADLDRIRNELSVEGVTSEDWGGDTPFVKVSAKMGTGVDELLEAVLLQAEILELTATPTAPGRGVVVESRLDKGRGPVATILVQDGTLRQGDMVLCGSNYGRVRAMLDENGKPVKEAGPSIPVEILGLDGTPEAGDELSVVADEKKAREVALFRQGKYREVKLARAHAGKLENIFETMGQEEKKTLNIVLKTDVRGSLEALQGSLGGLGNDEVQVRVIGGGVGGITESDANLALASNAVLFGFNVRADAGARKIVEQEGLDMRYYNVIYDIIEDVKKALTGMLGSDVRENILGVAEVRDVFRSPKFGAIAGCMVIEGTVYRNRPIRVLRDDVVIFEGELESLRRFKDDASEVRSGMECGIGVKSYNDVKVGDKIEVFEKVQVARTL.

The segment at 94-259 (QRSPEEIQAE…HGFQNPTGPV (166 aa)) is disordered. A compositionally biased stretch (basic and acidic residues) spans 96 to 138 (SPEEIQAEQKRELDERRAAENAARDKVEAEVRQRNEEQARRQA). Over residues 139–148 (ADSAVAAPAP) the composition is skewed to low complexity. Residues 149–159 (AAKPEPAPAAA) are compositionally biased toward pro residues. Residues 160–172 (PAPVVADAPASED) show a composition bias toward low complexity. Composition is skewed to basic and acidic residues over residues 173-202 (AAARAAERKKDETRRNESRTRDDDRRRGEA) and 226-235 (TTDEESDGAR). The span at 236-249 (RGRGGKGKLKKRNQ) shows a compositional bias: basic residues. In terms of domain architecture, tr-type G spans 342 to 509 (SRAPVVTVMG…AVLLQAEILE (168 aa)). The tract at residues 351–358 (GHVDHGKT) is G1. 351 to 358 (GHVDHGKT) is a binding site for GTP. The G2 stretch occupies residues 376–380 (GITQH). Residues 397–400 (DTPG) form a G3 region. GTP is bound by residues 397–401 (DTPGH) and 451–454 (NKID). The tract at residues 451-454 (NKID) is G4. The interval 487–489 (SAK) is G5.

This sequence belongs to the TRAFAC class translation factor GTPase superfamily. Classic translation factor GTPase family. IF-2 subfamily.

Its subcellular location is the cytoplasm. Functionally, one of the essential components for the initiation of protein synthesis. Protects formylmethionyl-tRNA from spontaneous hydrolysis and promotes its binding to the 30S ribosomal subunits. Also involved in the hydrolysis of GTP during the formation of the 70S ribosomal complex. The sequence is that of Translation initiation factor IF-2 from Pseudomonas putida (strain GB-1).